We begin with the raw amino-acid sequence, 309 residues long: Malate dehydrogenase (309 aa).

NAD(+)-binding positions include 10-15 and Asp-34; that span reads GAGNVG. The substrate site is built by Arg-83 and Arg-89. NAD(+)-binding positions include Asn-96 and 119–121; that span reads VSN. The substrate site is built by Asn-121 and Arg-152. Catalysis depends on His-176, which acts as the Proton acceptor.

It belongs to the LDH/MDH superfamily. MDH type 3 family.

The enzyme catalyses (S)-malate + NAD(+) = oxaloacetate + NADH + H(+). Functionally, catalyzes the reversible oxidation of malate to oxaloacetate. The chain is Malate dehydrogenase from Heliobacterium modesticaldum (strain ATCC 51547 / Ice1).